Here is a 186-residue protein sequence, read N- to C-terminus: MTDCSRCAGTNASGPNHWSERIRDIVDFPKPGIVFKDITPLLSDGPDFASALDEMAQPWRTTPLDAVLGIEALGFILGAALARELRTGFVPVRKPGKLPGRTLIREYALEYGTDRIEMHEGALPRGARVLIVDDVLATGGTLRAALGLAAQLELEIVGAAVLVELLALQGRQKWADDVPLLATLSF.

It belongs to the purine/pyrimidine phosphoribosyltransferase family. In terms of assembly, homodimer.

The protein localises to the cytoplasm. The enzyme catalyses AMP + diphosphate = 5-phospho-alpha-D-ribose 1-diphosphate + adenine. It participates in purine metabolism; AMP biosynthesis via salvage pathway; AMP from adenine: step 1/1. In terms of biological role, catalyzes a salvage reaction resulting in the formation of AMP, that is energically less costly than de novo synthesis. In Xanthomonas oryzae pv. oryzae (strain MAFF 311018), this protein is Adenine phosphoribosyltransferase.